An 841-amino-acid polypeptide reads, in one-letter code: Beta-adaptin-like protein A (841 aa).

Disordered regions lie at residues 1–25 and 650–671; these read MAPP…VSDL and DENK…LESS. 2 stretches are compositionally biased toward polar residues: residues 9-25 and 654-671; these read RYPS…VSDL and GVSN…LESS.

This sequence belongs to the adaptor complexes large subunit family. Adaptor protein complexes are heterotetramers composed of two large adaptins (beta-type subunit and alpha-type or delta-type or epsilon-type or gamma-type subunit), a medium adaptin (mu-type subunit) and a small adaptin (sigma-type subunit). Interacts with AHK2.

It localises to the golgi apparatus. The protein resides in the trans-Golgi network. Its subcellular location is the cytoplasmic vesicle. The protein localises to the clathrin-coated vesicle membrane. In terms of biological role, subunit of clathrin-associated adaptor protein complex that plays a role in protein sorting in the late-Golgi/trans-Golgi network (TGN) and/or endosomes. The AP complexes mediate both the recruitment of clathrin to membranes and the recognition of sorting signals within the cytosolic tails of transmembrane cargo molecules. In Arabidopsis thaliana (Mouse-ear cress), this protein is Beta-adaptin-like protein A (BETAA-AD).